Reading from the N-terminus, the 103-residue chain is Large ribosomal subunit protein bL21 (103 aa).

It belongs to the bacterial ribosomal protein bL21 family. Part of the 50S ribosomal subunit. Contacts protein L20.

This protein binds to 23S rRNA in the presence of protein L20. The chain is Large ribosomal subunit protein bL21 from Clostridium beijerinckii (strain ATCC 51743 / NCIMB 8052) (Clostridium acetobutylicum).